We begin with the raw amino-acid sequence, 435 residues long: Nematode resistance protein-like HSPRO2 (435 aa).

Interacts with SNF4.

Its subcellular location is the cytoplasm. Positive regulator of basal resistance. This chain is Nematode resistance protein-like HSPRO2 (HSPRO2), found in Arabidopsis thaliana (Mouse-ear cress).